The following is a 367-amino-acid chain: tRNA-specific 2-thiouridylase MnmA (367 aa).

ATP is bound by residues 24–31 (AMSGGVDS) and Leu-50. The Nucleophile role is filled by Cys-115. A disulfide bond links Cys-115 and Cys-211. Residue Gly-139 coordinates ATP. Residues 161–163 (KDQ) form an interaction with tRNA region. The Cysteine persulfide intermediate role is filled by Cys-211.

It belongs to the MnmA/TRMU family.

The protein localises to the cytoplasm. The enzyme catalyses S-sulfanyl-L-cysteinyl-[protein] + uridine(34) in tRNA + AH2 + ATP = 2-thiouridine(34) in tRNA + L-cysteinyl-[protein] + A + AMP + diphosphate + H(+). Its function is as follows. Catalyzes the 2-thiolation of uridine at the wobble position (U34) of tRNA, leading to the formation of s(2)U34. This chain is tRNA-specific 2-thiouridylase MnmA, found in Ehrlichia canis (strain Jake).